The chain runs to 433 residues: Enolase (433 aa).

Gln167 provides a ligand contact to (2R)-2-phosphoglycerate. Glu209 (proton donor) is an active-site residue. The Mg(2+) site is built by Asp246, Glu291, and Asp318. Residues Lys343, Arg372, Ser373, and Lys394 each coordinate (2R)-2-phosphoglycerate. Lys343 serves as the catalytic Proton acceptor.

It belongs to the enolase family. Component of the RNA degradosome, a multiprotein complex involved in RNA processing and mRNA degradation. Mg(2+) is required as a cofactor.

The protein localises to the cytoplasm. It localises to the secreted. The protein resides in the cell surface. The enzyme catalyses (2R)-2-phosphoglycerate = phosphoenolpyruvate + H2O. Its pathway is carbohydrate degradation; glycolysis; pyruvate from D-glyceraldehyde 3-phosphate: step 4/5. In terms of biological role, catalyzes the reversible conversion of 2-phosphoglycerate (2-PG) into phosphoenolpyruvate (PEP). It is essential for the degradation of carbohydrates via glycolysis. This Aeromonas salmonicida (strain A449) protein is Enolase.